The following is a 205-amino-acid chain: Holliday junction branch migration complex subunit RuvA (205 aa).

Positions 1–64 (MIGKLKGVVD…EDMIRLYGFR (64 aa)) are domain I. The domain II stretch occupies residues 65–143 (SDAEREWFRL…AFAPVDPALV (79 aa)). The interval 144–152 (RLAGAVEAR) is flexible linker. The interval 153–205 (TAPQPVADAISALVNLGYPQAQASAAVAAALQSAGAEAEAKTLIRLGLRELAR) is domain III.

The protein belongs to the RuvA family. In terms of assembly, homotetramer. Forms an RuvA(8)-RuvB(12)-Holliday junction (HJ) complex. HJ DNA is sandwiched between 2 RuvA tetramers; dsDNA enters through RuvA and exits via RuvB. An RuvB hexamer assembles on each DNA strand where it exits the tetramer. Each RuvB hexamer is contacted by two RuvA subunits (via domain III) on 2 adjacent RuvB subunits; this complex drives branch migration. In the full resolvosome a probable DNA-RuvA(4)-RuvB(12)-RuvC(2) complex forms which resolves the HJ.

Its subcellular location is the cytoplasm. Its function is as follows. The RuvA-RuvB-RuvC complex processes Holliday junction (HJ) DNA during genetic recombination and DNA repair, while the RuvA-RuvB complex plays an important role in the rescue of blocked DNA replication forks via replication fork reversal (RFR). RuvA specifically binds to HJ cruciform DNA, conferring on it an open structure. The RuvB hexamer acts as an ATP-dependent pump, pulling dsDNA into and through the RuvAB complex. HJ branch migration allows RuvC to scan DNA until it finds its consensus sequence, where it cleaves and resolves the cruciform DNA. The chain is Holliday junction branch migration complex subunit RuvA from Methylobacterium sp. (strain 4-46).